A 357-amino-acid polypeptide reads, in one-letter code: DNA replication and repair protein RecF (357 aa).

31 to 38 (GQNGAGKT) serves as a coordination point for ATP.

It belongs to the RecF family.

The protein localises to the cytoplasm. The RecF protein is involved in DNA metabolism; it is required for DNA replication and normal SOS inducibility. RecF binds preferentially to single-stranded, linear DNA. It also seems to bind ATP. The polypeptide is DNA replication and repair protein RecF (Coxiella burnetii (strain Dugway 5J108-111)).